The following is a 56-amino-acid chain: Alpha-conotoxin EpI (56 aa).

The first 16 residues, 1-16 (MFTVFLLVVLATTVVS), serve as a signal peptide directing secretion. Positions 17 to 39 (FTSDRASDSRKDAASGLIALTIK) are excised as a propeptide. Cystine bridges form between C41–C47 and C42–C55. A ser-Xaa-Pro motif, crucial for potent interaction with nAChR region spans residues 43 to 45 (SDP). Sulfotyrosine is present on Y54. Residue C55 is modified to Cysteine amide.

This sequence belongs to the conotoxin A superfamily. In terms of processing, both tyrosine sulfation and C-terminal amidation are important for activity and structure stability. Expressed by the venom duct.

The protein localises to the secreted. Alpha-conotoxins act on postsynaptic membranes, they bind to the nicotinic acetylcholine receptors (nAChR) and thus inhibit them. This native peptide blocks mammalian nicotinic acetylcholine receptors composed of alpha-3-beta-2/CHRNA3-CHRNB2 and alpha-3-beta-4/CHRNA3-CHRNB4 subunits. This is Alpha-conotoxin EpI from Conus episcopatus (Bishop's cone).